The primary structure comprises 254 residues: Geranylgeranylglyceryl phosphate synthase (254 aa).

D28 and S53 together coordinate Mg(2+). Sn-glycerol 1-phosphate contacts are provided by residues 172-178 (YLEAGSG), 203-204 (GG), and 225-226 (GT).

The protein belongs to the GGGP/HepGP synthase family. Group II subfamily. It depends on Mg(2+) as a cofactor.

Its subcellular location is the cytoplasm. It carries out the reaction sn-glycerol 1-phosphate + (2E,6E,10E)-geranylgeranyl diphosphate = sn-3-O-(geranylgeranyl)glycerol 1-phosphate + diphosphate. It functions in the pathway membrane lipid metabolism; glycerophospholipid metabolism. Its function is as follows. Prenyltransferase that catalyzes the transfer of the geranylgeranyl moiety of geranylgeranyl diphosphate (GGPP) to the C3 hydroxyl of sn-glycerol-1-phosphate (G1P). This reaction is the first ether-bond-formation step in the biosynthesis of archaeal membrane lipids. In Methanococcus vannielii (strain ATCC 35089 / DSM 1224 / JCM 13029 / OCM 148 / SB), this protein is Geranylgeranylglyceryl phosphate synthase.